A 444-amino-acid chain; its full sequence is Probable D-serine dehydratase (444 aa).

K118 carries the post-translational modification N6-(pyridoxal phosphate)lysine.

This sequence belongs to the serine/threonine dehydratase family. DsdA subfamily. The cofactor is pyridoxal 5'-phosphate.

It carries out the reaction D-serine = pyruvate + NH4(+). The chain is Probable D-serine dehydratase from Acinetobacter baumannii (strain ATCC 17978 / DSM 105126 / CIP 53.77 / LMG 1025 / NCDC KC755 / 5377).